Here is a 256-residue protein sequence, read N- to C-terminus: Thiazole synthase (256 aa).

Lys97 (schiff-base intermediate with DXP) is an active-site residue. 1-deoxy-D-xylulose 5-phosphate contacts are provided by residues Gly158, 184 to 185 (AG), and 206 to 207 (NT).

Belongs to the ThiG family. Homotetramer. Forms heterodimers with either ThiH or ThiS.

It localises to the cytoplasm. The catalysed reaction is [ThiS sulfur-carrier protein]-C-terminal-Gly-aminoethanethioate + 2-iminoacetate + 1-deoxy-D-xylulose 5-phosphate = [ThiS sulfur-carrier protein]-C-terminal Gly-Gly + 2-[(2R,5Z)-2-carboxy-4-methylthiazol-5(2H)-ylidene]ethyl phosphate + 2 H2O + H(+). It functions in the pathway cofactor biosynthesis; thiamine diphosphate biosynthesis. Its function is as follows. Catalyzes the rearrangement of 1-deoxy-D-xylulose 5-phosphate (DXP) to produce the thiazole phosphate moiety of thiamine. Sulfur is provided by the thiocarboxylate moiety of the carrier protein ThiS. In vitro, sulfur can be provided by H(2)S. This is Thiazole synthase from Pelotomaculum thermopropionicum (strain DSM 13744 / JCM 10971 / SI).